We begin with the raw amino-acid sequence, 286 residues long: Protein METABOLIC NETWORK MODULATOR 1 (286 aa).

Residues Met1 to Asn10 show a composition bias toward basic and acidic residues. Disordered regions lie at residues Met1–Ala60, Val123–Val146, and Gly181–Ser204. Residues Lys20–Gln29 show a composition bias toward basic residues. The segment covering Leu30–Leu39 has biased composition (basic and acidic residues). The span at Lys131–Glu140 shows a compositional bias: basic residues. Residues Pro191 to Ser204 are compositionally biased toward polar residues.

Mailny observed in young seedlings and in emerging leaves.

In terms of biological role, lineage-specific modulator of primary metabolism. Influences flowering time. In Arabidopsis thaliana (Mouse-ear cress), this protein is Protein METABOLIC NETWORK MODULATOR 1.